A 399-amino-acid chain; its full sequence is L-2-hydroxyglutarate dehydrogenase (399 aa).

This sequence belongs to the L2HGDH family. FAD is required as a cofactor.

The enzyme catalyses (S)-2-hydroxyglutarate + A = 2-oxoglutarate + AH2. Catalyzes the dehydrogenation of L-2-hydroxyglutarate (L2HG or(S)-2-hydroxyglutarate) to 2-oxoglutarate (alpha-ketoglutarate). Active in vitro with the artificial electron acceptor 2,6-dichlorophenolindophenol (DCPIP). Also displays a very low oxidase activity in vitro on L-2-hydroxyglutarate with O2 as the electron acceptor, but this activity is most likely not physiological. In Indibacter alkaliphilus (strain CCUG 57479 / KCTC 22604 / LW1), this protein is L-2-hydroxyglutarate dehydrogenase.